Here is a 200-residue protein sequence, read N- to C-terminus: Prolactin-2 (200 aa).

Residues 1 to 23 (MRQRRISGSNLMMVLCVVAMCRA) form the signal peptide. 2 cysteine pairs are disulfide-bonded: Cys64-Cys173 and Cys190-Cys200.

It belongs to the somatotropin/prolactin family.

Its subcellular location is the secreted. In Oreochromis mossambicus (Mozambique tilapia), this protein is Prolactin-2 (prl2).